The following is a 691-amino-acid chain: ATP-dependent zinc metalloprotease FtsH 2 (691 aa).

A disordered region spans residues 1-48; that stretch reads MTDEPQSDEQQTTEQERPLGTKRATRADGLRRPGVRSGLAERRSPAAD. Residues 1-64 lie on the Cytoplasmic side of the membrane; the sequence is MTDEPQSDEQ…AAVRRFLLRD (64 aa). Residues 14–31 are compositionally biased toward basic and acidic residues; that stretch reads EQERPLGTKRATRADGLR. A helical transmembrane segment spans residues 65-85; the sequence is VFALGLMIAALVIVILFFTLL. Topologically, residues 86 to 168 are extracellular; that stretch reads GATKPTSSGT…AVKQQPGKAQ (83 aa). The helical transmembrane segment at 169–189 threads the bilayer; that stretch reads VTIVVQFLLPILLLVCLFALF. The Cytoplasmic segment spans residues 190-691; sequence MRIGQDGGAG…ERGSARDRDA (502 aa). 265–272 is a binding site for ATP; the sequence is GPPGTGKT. A Zn(2+)-binding site is contributed by H486. Residue E487 is part of the active site. Residues H490 and D563 each contribute to the Zn(2+) site.

The protein in the central section; belongs to the AAA ATPase family. This sequence in the C-terminal section; belongs to the peptidase M41 family. As to quaternary structure, homohexamer. The cofactor is Zn(2+).

The protein resides in the cell membrane. Functionally, acts as a processive, ATP-dependent zinc metallopeptidase for both cytoplasmic and membrane proteins. Plays a role in the quality control of integral membrane proteins. In Conexibacter woesei (strain DSM 14684 / CCUG 47730 / CIP 108061 / JCM 11494 / NBRC 100937 / ID131577), this protein is ATP-dependent zinc metalloprotease FtsH 2.